Here is a 579-residue protein sequence, read N- to C-terminus: Sulfite reductase [NADPH] hemoprotein beta-component (579 aa).

[4Fe-4S] cluster-binding residues include cysteine 434, cysteine 440, cysteine 479, and cysteine 483. Residue cysteine 483 coordinates siroheme.

This sequence belongs to the nitrite and sulfite reductase 4Fe-4S domain family. Alpha(8)-beta(8). The alpha component is a flavoprotein, the beta component is a hemoprotein. Siroheme is required as a cofactor. [4Fe-4S] cluster serves as cofactor.

The enzyme catalyses hydrogen sulfide + 3 NADP(+) + 3 H2O = sulfite + 3 NADPH + 4 H(+). The protein operates within sulfur metabolism; hydrogen sulfide biosynthesis; hydrogen sulfide from sulfite (NADPH route): step 1/1. Functionally, component of the sulfite reductase complex that catalyzes the 6-electron reduction of sulfite to sulfide. This is one of several activities required for the biosynthesis of L-cysteine from sulfate. In Salmonella choleraesuis (strain SC-B67), this protein is Sulfite reductase [NADPH] hemoprotein beta-component.